Here is a 452-residue protein sequence, read N- to C-terminus: Metacaspase-1 (452 aa).

Residues 1–97 (MYPGAGRPTY…GPPLQGRPRD (97 aa)) form a disordered region. The segment covering 16-41 (QKGPYGQPQYQQQYAPPYPERYQQPY) has biased composition (low complexity). Active-site residues include H238 and C294.

It belongs to the peptidase C14B family.

Functionally, involved in cell death (apoptosis). In Eremothecium gossypii (strain ATCC 10895 / CBS 109.51 / FGSC 9923 / NRRL Y-1056) (Yeast), this protein is Metacaspase-1 (MCA1).